The primary structure comprises 126 residues: Ribosome-binding factor A (126 aa).

Belongs to the RbfA family. In terms of assembly, monomer. Binds 30S ribosomal subunits, but not 50S ribosomal subunits or 70S ribosomes.

It localises to the cytoplasm. In terms of biological role, one of several proteins that assist in the late maturation steps of the functional core of the 30S ribosomal subunit. Associates with free 30S ribosomal subunits (but not with 30S subunits that are part of 70S ribosomes or polysomes). Required for efficient processing of 16S rRNA. May interact with the 5'-terminal helix region of 16S rRNA. The protein is Ribosome-binding factor A of Halorhodospira halophila (strain DSM 244 / SL1) (Ectothiorhodospira halophila (strain DSM 244 / SL1)).